The chain runs to 447 residues: Argininosuccinate lyase (447 aa).

It belongs to the lyase 1 family. Argininosuccinate lyase subfamily.

It is found in the cytoplasm. It carries out the reaction 2-(N(omega)-L-arginino)succinate = fumarate + L-arginine. The protein operates within amino-acid biosynthesis; L-arginine biosynthesis; L-arginine from L-ornithine and carbamoyl phosphate: step 3/3. The polypeptide is Argininosuccinate lyase (Bacteroides fragilis (strain YCH46)).